The chain runs to 261 residues: Small ribosomal subunit protein uS2 (261 aa).

Ser-2 bears the N-acetylserine mark. The tract at residues 211-261 is disordered; sequence EQNAAEDSKAEDAEEAPVADAEPDWSGETEDVDWAESGATPAAEEAAASNW. Over residues 222-244 the composition is skewed to acidic residues; it reads DAEEAPVADAEPDWSGETEDVDW. Residues 245 to 261 are compositionally biased toward low complexity; sequence AESGATPAAEEAAASNW.

It belongs to the universal ribosomal protein uS2 family. Component of the small ribosomal subunit. Mature ribosomes consist of a small (40S) and a large (60S) subunit. The 40S subunit contains about 33 different proteins and 1 molecule of RNA (18S). The 60S subunit contains about 49 different proteins and 3 molecules of RNA (25S, 5.8S and 5S). Interacts with RPS21.

The protein localises to the cytoplasm. Required for the assembly and/or stability of the 40S ribosomal subunit. Required for the processing of the 20S rRNA-precursor to mature 18S rRNA in a late step of the maturation of 40S ribosomal subunits. The polypeptide is Small ribosomal subunit protein uS2 (Meyerozyma guilliermondii (strain ATCC 6260 / CBS 566 / DSM 6381 / JCM 1539 / NBRC 10279 / NRRL Y-324) (Yeast)).